The primary structure comprises 933 residues: Melanoma-associated antigen E1 (933 aa).

4 disordered regions span residues 1 to 113 (MSLV…VSAG), 149 to 236 (GASI…GINL), 256 to 282 (SDIS…VQST), and 360 to 393 (TSGL…EDEN). Over residues 8–23 (SRRRRGGRANGRKNSG) the composition is skewed to basic residues. 4 stretches are compositionally biased toward polar residues: residues 64–97 (GGSS…QLPT), 149–166 (GASI…NVQP), 173–184 (GTSVPPTFSEES), and 219–236 (APST…GINL). MAGE domains are found at residues 467 to 666 (MEQN…YNEA) and 721 to 912 (LESK…YREA). The interaction with DTNA stretch occupies residues 719–933 (SRLESKSRKL…RRPLVVRNLR (215 aa)).

Interacts with DTNA. Interacts with TRIM28.

It is found in the cytoplasm. The protein resides in the perinuclear region. The protein localises to the nucleus. It localises to the cell membrane. May enhance ubiquitin ligase activity of RING-type zinc finger-containing E3 ubiquitin-protein ligases. Proposed to act through recruitment and/or stabilization of the Ubl-conjugating enzyme (E2) at the E3:substrate complex. This is Melanoma-associated antigen E1 (Magee1) from Rattus norvegicus (Rat).